Consider the following 957-residue polypeptide: Kinesin heavy chain isoform 5C (957 aa).

The Kinesin motor domain occupies 8–327; the sequence is SIKVMCRFRP…LMFGQRAKTI (320 aa). Residues Gln-87, Ser-89, Ser-90, Gly-91, Lys-92, Thr-93, His-94, and Lys-99 each coordinate ATP. Residues 174 to 315 form a microtubule-binding region; sequence VSSPEEVMDV…PSVFNEAETK (142 aa). A coiled-coil region spans residues 406-923; sequence VAGISTEEKE…ARRAHSAQIA (518 aa). Positions 859 to 956 are globular; sequence RCELPKLEKR…GSSSNSTHYQ (98 aa). The tract at residues 911–957 is disordered; the sequence is KNMARRAHSAQIAKPIRPGHYPASSPTAVHAIRGGGGSSSNSTHYQK.

It belongs to the TRAFAC class myosin-kinesin ATPase superfamily. Kinesin family. Kinesin subfamily. As to quaternary structure, oligomer composed of two heavy chains and two light chains. Interacts with GRIP1 and KLC3. Interacts with TRAK1. Interacts with ZFYVE27. As to expression, highest expression in brain, prostate and testis, and moderate expression in kidney, small intestine and ovary.

The protein resides in the cytoplasm. The protein localises to the cytoskeleton. It is found in the cell projection. Its subcellular location is the dendrite. The catalysed reaction is ATP + H2O = ADP + phosphate + H(+). Its function is as follows. Microtubule-associated force-producing protein that may play a role in organelle transport. Has ATPase activity. Involved in synaptic transmission. Mediates dendritic trafficking of mRNAs. Required for anterograde axonal transportation of MAPK8IP3/JIP3 which is essential for MAPK8IP3/JIP3 function in axon elongation. This is Kinesin heavy chain isoform 5C (KIF5C) from Homo sapiens (Human).